A 457-amino-acid polypeptide reads, in one-letter code: MALWGGRFTQAADQRFKQFNDSLRFDYRLAEQDIVGSVAWSKALVTVGVLSAAEQQQLEEALNVLLEEVRANPQQILASDAEDIHSWVEGKLIDKVGQLGKKLHTGRSRNDQVATDLKLWCKDTVVELLSANRQLQSALVETAQQNQDAVMPGYTHLQRAQPVTFAHWCLAYVEMLARDESRLQDALKRLDVSPLGCGALAGTAYEIDREQLAGWLGFASATRNSLDSVSDRDHVLELLSDAAIGMVHLSRFAEDLIFFNSGEANFVELSDRVTSGSSLMPQKKNPDALELIRGKCGRVQGALTGMMMTLKGLPLAYNKDMQEDKEGLFDALDTWLDCLHMAALVLDGIQVKRPRCAEAAQQGYANATELADYLVAKGVPFREAHHIVGEAVVEAIAQGKPLEALTLADLQKFSPVIADDVYPILSLQSCLEKRAAKGGVSPQQVAQAINEAKARLS.

This sequence belongs to the lyase 1 family. Argininosuccinate lyase subfamily.

The protein resides in the cytoplasm. It carries out the reaction 2-(N(omega)-L-arginino)succinate = fumarate + L-arginine. Its pathway is amino-acid biosynthesis; L-arginine biosynthesis; L-arginine from L-ornithine and carbamoyl phosphate: step 3/3. This chain is Argininosuccinate lyase, found in Klebsiella pneumoniae subsp. pneumoniae (strain ATCC 700721 / MGH 78578).